Here is a 297-residue protein sequence, read N- to C-terminus: Tyrosine recombinase XerD (297 aa).

The Core-binding (CB) domain maps to 1–86 (MNDLIEDFLH…SLRSFFHYLM (86 aa)). The Tyr recombinase domain maps to 107-291 (GLPKVLNLDD…TKLRLKDVYK (185 aa)). Active-site residues include R147, K171, H243, R246, and H269. The active-site O-(3'-phospho-DNA)-tyrosine intermediate is Y278.

It belongs to the 'phage' integrase family. XerD subfamily. In terms of assembly, forms a cyclic heterotetrameric complex composed of two molecules of XerC and two molecules of XerD.

It is found in the cytoplasm. Functionally, site-specific tyrosine recombinase, which acts by catalyzing the cutting and rejoining of the recombining DNA molecules. The XerC-XerD complex is essential to convert dimers of the bacterial chromosome into monomers to permit their segregation at cell division. It also contributes to the segregational stability of plasmids. The chain is Tyrosine recombinase XerD from Listeria monocytogenes serotype 4b (strain F2365).